A 428-amino-acid chain; its full sequence is MPEQAVKQSHDIDALMMTIGAQAKAASRPLSIAGTDQKNRALLAMASAIEASKEAILAANRKDLAAAESAGLAASFVDRLTLNDARIAGIAEGIRSVAALADPVGEVIAAWDRPNGLKIERVRTPLGVIGVIYESRPNVTADAGALCLKAGNAVILRGGSDSQHSSRAIHACLVQGLRIAGLPENAIQLVPVTDRAAVGALLSGLKGTVDVIVPRGGKSLVARVQSEARVPVFAHLEGICHIYVDKSADLDMAKAIVVNAKMRRTGICGAAETLLVDASAVSSHLEPVVKALLDAGCEVRGSQPVRNVVEGLEAATEEDWRTEYLDAIISVAVVDGISGAIEHIGTYSSNHTEAVIAEDPDVVARFFNELDSAILLHNASTQFADGGEFGMGAEIGIATGKMHARGPVGVEQLTSFKYRVHGTGQTRT.

This sequence belongs to the gamma-glutamyl phosphate reductase family.

It localises to the cytoplasm. The enzyme catalyses L-glutamate 5-semialdehyde + phosphate + NADP(+) = L-glutamyl 5-phosphate + NADPH + H(+). It functions in the pathway amino-acid biosynthesis; L-proline biosynthesis; L-glutamate 5-semialdehyde from L-glutamate: step 2/2. Catalyzes the NADPH-dependent reduction of L-glutamate 5-phosphate into L-glutamate 5-semialdehyde and phosphate. The product spontaneously undergoes cyclization to form 1-pyrroline-5-carboxylate. The chain is Gamma-glutamyl phosphate reductase from Agrobacterium fabrum (strain C58 / ATCC 33970) (Agrobacterium tumefaciens (strain C58)).